Here is a 302-residue protein sequence, read N- to C-terminus: Oxygen-dependent coproporphyrinogen-III oxidase (302 aa).

Substrate is bound at residue Ser-94. A divalent metal cation is bound by residues His-98 and His-108. The active-site Proton donor is His-108. Asn-110–Arg-112 serves as a coordination point for substrate. 2 residues coordinate a divalent metal cation: His-147 and His-177. Residues Tyr-242–Asp-277 form an important for dimerization region. Gly-260–Arg-262 provides a ligand contact to substrate.

It belongs to the aerobic coproporphyrinogen-III oxidase family. Homodimer. Requires a divalent metal cation as cofactor.

The protein resides in the cytoplasm. The catalysed reaction is coproporphyrinogen III + O2 + 2 H(+) = protoporphyrinogen IX + 2 CO2 + 2 H2O. It functions in the pathway porphyrin-containing compound metabolism; protoporphyrin-IX biosynthesis; protoporphyrinogen-IX from coproporphyrinogen-III (O2 route): step 1/1. Involved in the heme biosynthesis. Catalyzes the aerobic oxidative decarboxylation of propionate groups of rings A and B of coproporphyrinogen-III to yield the vinyl groups in protoporphyrinogen-IX. The sequence is that of Oxygen-dependent coproporphyrinogen-III oxidase from Alcanivorax borkumensis (strain ATCC 700651 / DSM 11573 / NCIMB 13689 / SK2).